We begin with the raw amino-acid sequence, 983 residues long: Alanine--tRNA ligase, mitochondrial (983 aa).

A mitochondrion-targeting transit peptide spans 1–24 (MTSTTGLRNLTLSFKKQLTTSTRT). Serine 504 is modified (phosphoserine). Residues histidine 625, histidine 629, cysteine 744, and histidine 748 each coordinate Zn(2+). Serine 975 is modified (phosphoserine).

The protein belongs to the class-II aminoacyl-tRNA synthetase family. In terms of assembly, monomer. It depends on Zn(2+) as a cofactor.

Its subcellular location is the cytoplasm. The protein resides in the mitochondrion. The catalysed reaction is tRNA(Ala) + L-alanine + ATP = L-alanyl-tRNA(Ala) + AMP + diphosphate. Catalyzes the attachment of alanine to tRNA(Ala) in a two-step reaction: alanine is first activated by ATP to form Ala-AMP and then transferred to the acceptor end of tRNA(Ala). Also edits incorrectly charged tRNA(Ala) via its editing domain. The sequence is that of Alanine--tRNA ligase, mitochondrial from Saccharomyces cerevisiae (strain ATCC 204508 / S288c) (Baker's yeast).